Here is a 174-residue protein sequence, read N- to C-terminus: von Hippel-Lindau tumor suppressor homolog (174 aa).

This sequence belongs to the VHL family. In terms of assembly, interacts with hif-1 (hydroxylated on 'Pro-621'); the interaction induces hif-1 degradation. May be a component of the cullin E3 ubiquitin ligase complex.

Its pathway is protein modification; protein ubiquitination. In terms of biological role, involved in the response to variation in environmental oxygen levels by targeting the hypoxia-inducible transcription factor hif-1 for proteasomal degradation when oxygen levels are normal (around 20%). By regulating hif-1 expression, plays a role in iron homeostasis, aging, heat acclimation and progeny size. Mediates resistance to enteropathogenic E.coli. Mediates susceptibility to B.thuringiensis pore-forming toxins. Not involved in P.aeruginosa susceptibility. This chain is von Hippel-Lindau tumor suppressor homolog, found in Caenorhabditis elegans.